Reading from the N-terminus, the 161-residue chain is Phosphopantetheine adenylyltransferase (161 aa).

Thr-10 serves as a coordination point for substrate. ATP contacts are provided by residues 10–11 (TF) and His-18. Lys-42, Leu-74, and Arg-88 together coordinate substrate. Residues 89–91 (GLR), Glu-99, and 124–130 (NAFISSS) contribute to the ATP site.

This sequence belongs to the bacterial CoaD family. Homohexamer. Mg(2+) serves as cofactor.

Its subcellular location is the cytoplasm. The catalysed reaction is (R)-4'-phosphopantetheine + ATP + H(+) = 3'-dephospho-CoA + diphosphate. The protein operates within cofactor biosynthesis; coenzyme A biosynthesis; CoA from (R)-pantothenate: step 4/5. Its function is as follows. Reversibly transfers an adenylyl group from ATP to 4'-phosphopantetheine, yielding dephospho-CoA (dPCoA) and pyrophosphate. The protein is Phosphopantetheine adenylyltransferase of Wolinella succinogenes (strain ATCC 29543 / DSM 1740 / CCUG 13145 / JCM 31913 / LMG 7466 / NCTC 11488 / FDC 602W) (Vibrio succinogenes).